The primary structure comprises 62 residues: Protein translocase subunit SecE (62 aa).

Residues 40-60 (LLVLAVVGVLAYIIQLALTLI) form a helical membrane-spanning segment.

This sequence belongs to the SecE/SEC61-gamma family. In terms of assembly, component of the Sec protein translocase complex. Heterotrimer consisting of SecY (alpha), SecG (beta) and SecE (gamma) subunits. The heterotrimers can form oligomers, although 1 heterotrimer is thought to be able to translocate proteins. Interacts with the ribosome. May interact with SecDF, and other proteins may be involved.

The protein resides in the cell membrane. Functionally, essential subunit of the Sec protein translocation channel SecYEG. Clamps together the 2 halves of SecY. May contact the channel plug during translocation. In Saccharolobus solfataricus (strain ATCC 35092 / DSM 1617 / JCM 11322 / P2) (Sulfolobus solfataricus), this protein is Protein translocase subunit SecE.